A 1026-amino-acid polypeptide reads, in one-letter code: MRFFALFIYRPVATILIAAAITLCGILGFRLLPVAPLPQVDFPVIMVSASLPGASPETMASSVATPLERSLGRIAGVNEMTSSSSLGSTRIILEFNFDRDINGAARDVQAAINAAQSLLPGGMPSRPTYRKANPSDAPIMILTLTSESWSQGKLYDFASTQLAQTIAQIDGVGDIDVGGSSLPAVRVGLNPQALFNQGVSLDEVREAIDSANVRRPQGAIEDSVHRWQIQTNDELKTAAEYQPLIIHYNNGAAVRLGDVASVTDSVQDVRNAGMTNAKPAILLMIRKLPEANIIQTVDGIRAKLPELRAMIPAAIDLQIAQDRSPTIRASLQEVEETLAISVALVILVVFLFLRSGRATLIPAVAVPVSLIGTFAAMYLCGFSLNNLSLMALTIATGFVVDDAIVVLENIARHLEAGMKPLQAALQGTREVGFTVISMSLSLVAVFLPLLLMGGLPGRLLREFAVTLSVAIGISLVVSLTLTPMMCGWMLKSSKPRTQPRKRGVGRLLVALQQGYGTSLKWVLNHTRLVGVVFLGTVALNIWLYIAIPKTFFPEQDTGVLMGGIQADQSISFQAMRGKLQDFMKIIRDDPAVNNVTGFTGGSRVNSGMMFITLKPRGERKETAQQIIDRLRVKLAKEPGARLFLMAVQDIRVGGRQANASYQYTLLSDSLAALREWEPKIRKALSALPQLADVNSDQQDNGAEMNLIYDRDTMSRLGIDVQAANSLLNNAFGQRQISTIYQPMNQYKVVMEVDPRYSQDISALEKMFVINRDGKAIPLSYFAQWRPANAPLSVNHQGLSAASTIAFNLPTGTSLSQATEAINRTMTQLGVPSTVRGSFSGTAQVFQQTMNSQLILIVAAIATVYIVLGILYESYVHPLTILSTLPSAGVGALLALELFNAPFSLIALIGIMLLIGIVKKNAIMMVDFALEAQRSGGLTPAQAIFQACLLRFRPIMMTTLAALFGALPLVLSGGDGSELRQPLGITIVGGLVMSQLLTLYTTPVVYLFFDRLRLRFSRKNSKPVVEI.

Helical transmembrane passes span 15-35, 333-353, 360-380, 387-407, 431-451, 463-483, 528-548, 853-873, 897-917, 953-973, and 984-1004; these read ILIAAAITLCGILGFRLLPVA, EVEETLAISVALVILVVFLFL, LIPAVAVPVSLIGTFAAMYLC, LSLMALTIATGFVVDDAIVVL, VGFTVISMSLSLVAVFLPLLL, FAVTLSVAIGISLVVSLTLTP, LVGVVFLGTVALNIWLYIAIP, LILIVAAIATVYIVLGILYES, LFNAPFSLIALIGIMLLIGIV, PIMMTTLAALFGALPLVLSGG, and ITIVGGLVMSQLLTLYTTPVV.

It belongs to the resistance-nodulation-cell division (RND) (TC 2.A.6) family. MdtC subfamily. As to quaternary structure, part of a tripartite efflux system composed of MdtA, MdtB and MdtC. MdtC forms a heteromultimer with MdtB.

The protein resides in the cell inner membrane. In Salmonella gallinarum (strain 287/91 / NCTC 13346), this protein is Multidrug resistance protein MdtC.